The following is a 120-amino-acid chain: Small ribosomal subunit protein uS13 (120 aa).

The interval 96-120 is disordered; sequence PCRGQRTRTNARTRKGPRKAIAGKK.

Belongs to the universal ribosomal protein uS13 family. As to quaternary structure, part of the 30S ribosomal subunit. Forms a loose heterodimer with protein S19. Forms two bridges to the 50S subunit in the 70S ribosome.

Functionally, located at the top of the head of the 30S subunit, it contacts several helices of the 16S rRNA. In the 70S ribosome it contacts the 23S rRNA (bridge B1a) and protein L5 of the 50S subunit (bridge B1b), connecting the 2 subunits; these bridges are implicated in subunit movement. Contacts the tRNAs in the A and P-sites. The protein is Small ribosomal subunit protein uS13 of Dechloromonas aromatica (strain RCB).